The primary structure comprises 244 residues: MAKAHSSLVFCLLALALVRFAQAKCTNGYTFLGIKELSEKDKQKLLDFHNKFRELTAAGEAPAPKGEDGRERRQPPAANMLELTWHKKAEKQAYKWARTCEWKHNNATDKAGNSMGQNLGRKMSTEKTDVDDTFDKWSYDLVRGWFDEAKLYKYGSGFSMSTGHYTQVVWANTSQVGCGYSYYMQIDEYNQKWYTGYLVCNYSPAGNFNNREPYEISKEKCTDPKLESSKNYKHLCVLKKKKKN.

A signal peptide spans 1–23 (MAKAHSSLVFCLLALALVRFAQA). The region spanning 46–202 (LDFHNKFREL…WYTGYLVCNY (157 aa)) is the SCP domain. Residues Asn-106 and Asn-172 are each glycosylated (N-linked (GlcNAc...) asparagine).

It belongs to the CRISP family. Venom allergen 5-like subfamily. Salivary gland (at protein level).

It localises to the secreted. Its function is as follows. Inhibits host platelet aggregation induced by low doses of collagen. In Triatoma infestans (Assassin bug), this protein is Salivary antigen-5.